Reading from the N-terminus, the 259-residue chain is Beta-glucanase (259 aa).

The first 31 residues, 1 to 31 (MVKSKYLVFISVFSLLFGVFVVGFSHQGVKA), serve as a signal peptide directing secretion. The 221-residue stretch at 35 to 255 (RPMGTAFYES…WVRYTPLQNY (221 aa)) folds into the GH16 domain. The Nucleophile role is filled by glutamate 142. Residue glutamate 146 is the Proton donor of the active site.

It belongs to the glycosyl hydrolase 16 family.

The catalysed reaction is Hydrolysis of (1-&gt;4)-beta-D-glucosidic linkages in beta-D-glucans containing (1-&gt;3)- and (1-&gt;4)-bonds.. Hydrolyzes B-glucans containing mixed beta-1,3 and beta-1,4 linkages. This is Beta-glucanase (bglBB) from Brevibacillus brevis (Bacillus brevis).